The following is a 431-amino-acid chain: Glucose-1-phosphate adenylyltransferase (431 aa).

Residue lysine 39 participates in beta-D-fructose 1,6-bisphosphate binding. AMP-binding residues include arginine 40, histidine 46, and arginine 52. An alpha-D-glucose 1-phosphate-binding site is contributed by tyrosine 114. An AMP-binding site is contributed by arginine 130. Alpha-D-glucose 1-phosphate-binding positions include glycine 179, 194 to 195 (EK), and serine 212. AMP is bound by residues glutamate 370 and arginine 386. Residues 419 to 423 (REMLR) and 429 to 431 (QER) each bind beta-D-fructose 1,6-bisphosphate.

Belongs to the bacterial/plant glucose-1-phosphate adenylyltransferase family. Homotetramer.

It catalyses the reaction alpha-D-glucose 1-phosphate + ATP + H(+) = ADP-alpha-D-glucose + diphosphate. Its pathway is glycan biosynthesis; glycogen biosynthesis. Allosterically activated by fructose-1,6-bisphosphate (F16BP) and inhibited by AMP. Involved in the biosynthesis of ADP-glucose, a building block required for the elongation reactions to produce glycogen. Catalyzes the reaction between ATP and alpha-D-glucose 1-phosphate (G1P) to produce pyrophosphate and ADP-Glc. In Salmonella paratyphi C (strain RKS4594), this protein is Glucose-1-phosphate adenylyltransferase.